An 879-amino-acid chain; its full sequence is Prostaglandin F2 receptor negative regulator (879 aa).

Positions 1–21 are cleaved as a signal peptide; the sequence is MGRPAPRPLLLALLSLAVCRG. 2 Ig-like C2-type domains span residues 22 to 137 and 149 to 263; these read RVVR…DTVQ and PSSR…QEIQ. Residues 22 to 832 are Extracellular-facing; the sequence is RVVRVPAGTL…MDVLNAFKYP (811 aa). Cystine bridges form between cysteine 43–cysteine 119 and cysteine 169–cysteine 247. An N-linked (GlcNAc...) asparagine glycan is attached at asparagine 44. Residues 89–91 carry the Cell attachment site motif; it reads RGD. Threonine 271 is subject to Phosphothreonine. 4 Ig-like C2-type domains span residues 276–389, 406–536, 544–662, and 688–813; these read PTAL…WHKV, PEYQ…DVFS, ASED…AWSP, and PTFN…AEIH. Cysteine 299 and cysteine 373 are oxidised to a cystine. Residues asparagine 300, asparagine 383, and asparagine 413 are each glycosylated (N-linked (GlcNAc...) asparagine). The short motif at 424–427 is the Endoplasmic reticulum retention signal element; the sequence is PTEL. The cysteines at positions 429 and 515 are disulfide-linked. Residues asparagine 525, asparagine 600, asparagine 618, and asparagine 691 are each glycosylated (N-linked (GlcNAc...) asparagine). Cysteine 571 and cysteine 655 are disulfide-bonded. The short motif at 703–705 is the Cell attachment site element; the sequence is RGD. Cysteine 711 and cysteine 793 are joined by a disulfide. Residues 833 to 853 form a helical membrane-spanning segment; that stretch reads LLIGVGLSTVIGLLSCLIGYC. At 854 to 879 the chain is on the cytoplasmic side; it reads SSHWCCKKEVRETRRERRRLMSMEMD.

Interacts with CD9 and CD81. Part of a complex composed of CD9, CD81 and IGSF8. Also seems to interact with CD63, CD82 and CD151. In terms of tissue distribution, expressed in myoblasts (at protein level).

It localises to the endoplasmic reticulum membrane. The protein localises to the golgi apparatus. It is found in the trans-Golgi network membrane. Inhibits the binding of prostaglandin F2-alpha (PGF2-alpha) to its specific FP receptor, by decreasing the receptor number rather than the affinity constant. Functional coupling with the prostaglandin F2-alpha receptor seems to occur. In myoblasts, associates with tetraspanins CD9 and CD81 to prevent myotube fusion during muscle regeneration. This is Prostaglandin F2 receptor negative regulator (Ptgfrn) from Mus musculus (Mouse).